The sequence spans 123 residues: Defensin beta 118 (123 aa).

The signal sequence occupies residues 1 to 19 (MKLLLLALPMLVLLPQVIP). 3 disulfides stabilise this stretch: Cys-27-Cys-54, Cys-34-Cys-48, and Cys-38-Cys-55. Positions 65–123 (VPTTSPTPLSDSTRGVIDDILTVRFTTDYFEVSSKKNMVEESEVGQGTQTSLPNVHHSS) are excised as a propeptide. Residues 100–123 (KNMVEESEVGQGTQTSLPNVHHSS) form a disordered region. Positions 109–123 (GQGTQTSLPNVHHSS) are enriched in polar residues.

It belongs to the beta-defensin family. In terms of processing, the three-dimensional structure formed by the three intramolecular disulfide bridges is indispensable for antimicrobial activity.

Its subcellular location is the secreted. Functionally, host defense peptide that exhibits antimicrobial activity against both Gram-negative bacteria, such as E.coli and S.typhimurium, and Gram-positive bacteria, such as S.aureus and B.subtilis. Inhibits cell adhesion of E.coli on intestinal epithelial enterocytes. Causes rapid permeabilization of both the outer and inner membrane of E.coli, leading to morphological alterations on the bacterial surface. Binds to bacterial lipopolysaccharides (LPS) with high affinity, and may thereby be involved in immunoregulation through LPS neutralization. May contribute to epididymal innate immunity and protect the sperm against attack by microorganisms. This chain is Defensin beta 118 (DEFB118), found in Pongo pygmaeus (Bornean orangutan).